A 258-amino-acid polypeptide reads, in one-letter code: Large ribosomal subunit protein uL5c (258 aa).

Residues 1-38 (MASTSLLQSTSSSFAGVRFHCRTSAAPRVGLSSFTVKA) constitute a chloroplast transit peptide.

Component of the chloroplast large ribosomal subunit (LSU). Mature 70S chloroplast ribosomes of higher plants consist of a small (30S) and a large (50S) subunit. The 30S small subunit contains 1 molecule of ribosomal RNA (16S rRNA) and 24 different proteins. The 50S large subunit contains 3 rRNA molecules (23S, 5S and 4.5S rRNA) and 33 different proteins.

Its subcellular location is the plastid. It is found in the chloroplast. Its function is as follows. Component of the chloroplast ribosome (chloro-ribosome), a dedicated translation machinery responsible for the synthesis of chloroplast genome-encoded proteins, including proteins of the transcription and translation machinery and components of the photosynthetic apparatus. This Spinacia oleracea (Spinach) protein is Large ribosomal subunit protein uL5c (RPL5).